The sequence spans 312 residues: Beta-ketoacyl-[acyl-carrier-protein] synthase III (312 aa).

Residues C112 and H237 contribute to the active site. The interval Q238–R242 is ACP-binding. N267 is a catalytic residue.

It belongs to the thiolase-like superfamily. FabH family. As to quaternary structure, homodimer.

It is found in the cytoplasm. The enzyme catalyses (2S)-2-methylbutanoyl-CoA + malonyl-[ACP] + H(+) = (4S)-4-methyl-3-oxohexanoyl-[ACP] + CO2 + CoA. The catalysed reaction is 2-methylpropanoyl-CoA + malonyl-[ACP] + H(+) = 4-methyl-3-oxopentanoyl-[ACP] + CO2 + CoA. It carries out the reaction 3-methylbutanoyl-CoA + malonyl-[ACP] + H(+) = 5-methyl-3-oxohexanoyl-[ACP] + CO2 + CoA. It catalyses the reaction malonyl-[ACP] + acetyl-CoA + H(+) = 3-oxobutanoyl-[ACP] + CO2 + CoA. Its pathway is lipid metabolism; fatty acid biosynthesis. Functionally, catalyzes the condensation reaction of fatty acid synthesis by the addition to an acyl acceptor of two carbons from malonyl-ACP. Catalyzes the first condensation reaction which initiates fatty acid synthesis and may therefore play a role in governing the total rate of fatty acid production. Possesses both acetoacetyl-ACP synthase and acetyl transacylase activities. Can use branched-chain acyl-CoAs, with a preference for 2-methylbutanoyl-CoA, the precursor of odd-numbered anteiso fatty acids, at 30 degrees Celsius, which is further increased at a low temperature. Shows weak activity with acetyl-CoA. The sequence is that of Beta-ketoacyl-[acyl-carrier-protein] synthase III from Listeria monocytogenes serotype 1/2a (strain 10403S).